Consider the following 86-residue polypeptide: SEED MATURATION PROTEIN 1 (86 aa).

The disordered stretch occupies residues 52-86 (RIEKGKEQSAASGDQTQIQRDIKDIKGTRTDDSPR). Residues 60-70 (SAASGDQTQIQ) are compositionally biased toward polar residues. Positions 71–86 (RDIKDIKGTRTDDSPR) are enriched in basic and acidic residues.

The protein belongs to the LEA type 3 family.

Functionally, protein chaperone involved in seed maturation and dormancy maintenance after high temperature fluctuation (e.g. secondary dormancy after 3 days at 40 degrees Celsius), probably by protecting heat labile proteins required for secondary dormancy (e.g. G6PDH, HOP3, SR45, ECP63, SCL33, RPL32B, ChlADR1, MSBP1, MBF1B, At3g01690, At1g15280, At1g15290, At2g31410, At1g11630, At1g65090, EMB2279, EMB1674 and RPL35C). The sequence is that of SEED MATURATION PROTEIN 1 from Arabidopsis thaliana (Mouse-ear cress).